Here is a 296-residue protein sequence, read N- to C-terminus: Ribonuclease HIII (296 aa).

In terms of domain architecture, RNase H type-2 spans 81-296 (QAMIGTDEVG…TQKAKQLLER (216 aa)). Residues aspartate 87, glutamate 88, and aspartate 190 each coordinate a divalent metal cation.

Belongs to the RNase HII family. RnhC subfamily. Mn(2+) is required as a cofactor. Mg(2+) serves as cofactor.

It is found in the cytoplasm. The catalysed reaction is Endonucleolytic cleavage to 5'-phosphomonoester.. Endonuclease that specifically degrades the RNA of RNA-DNA hybrids. The polypeptide is Ribonuclease HIII (Streptococcus gordonii (strain Challis / ATCC 35105 / BCRC 15272 / CH1 / DL1 / V288)).